The sequence spans 90 residues: Putative regulatory protein cce_4590 (90 aa).

Belongs to the RemA family.

In Crocosphaera subtropica (strain ATCC 51142 / BH68) (Cyanothece sp. (strain ATCC 51142)), this protein is Putative regulatory protein cce_4590.